The chain runs to 631 residues: Chaperone protein HtpG (631 aa).

The segment at 1–339 (MSAQKETLGF…SNDLPLNVSR (339 aa)) is a; substrate-binding. The tract at residues 340–556 (EILQESKDID…EHDMSAHLER (217 aa)) is b. The tract at residues 557–631 (MLKAAGQKIE…INKLMLELSV (75 aa)) is c.

Belongs to the heat shock protein 90 family. Homodimer.

The protein localises to the cytoplasm. Molecular chaperone. Has ATPase activity. The protein is Chaperone protein HtpG of Chromobacterium violaceum (strain ATCC 12472 / DSM 30191 / JCM 1249 / CCUG 213 / NBRC 12614 / NCIMB 9131 / NCTC 9757 / MK).